Reading from the N-terminus, the 196-residue chain is Phosphate-specific transport system accessory protein PhoU homolog (196 aa).

It belongs to the PhoU family. As to quaternary structure, homodimer.

The protein resides in the cytoplasm. Its function is as follows. Plays a role in the regulation of phosphate uptake. The polypeptide is Phosphate-specific transport system accessory protein PhoU homolog (Archaeoglobus fulgidus (strain ATCC 49558 / DSM 4304 / JCM 9628 / NBRC 100126 / VC-16)).